Here is a 212-residue protein sequence, read N- to C-terminus: Pyridoxine/pyridoxamine 5'-phosphate oxidase (212 aa).

Residues 1–20 (MSDSAMEPQNPLTSGDFTAA) form a disordered region. Residues 59-64 (RMVLLK), 74-75 (YT), lysine 81, and glutamine 103 contribute to the FMN site. Lysine 64 serves as a coordination point for substrate. Substrate-binding residues include tyrosine 121, arginine 125, and serine 129. Residues 138–139 (QS) and tryptophan 183 contribute to the FMN site. Residue 189–191 (RLH) participates in substrate binding. Position 193 (arginine 193) interacts with FMN.

Belongs to the pyridoxamine 5'-phosphate oxidase family. Homodimer. FMN is required as a cofactor.

It carries out the reaction pyridoxamine 5'-phosphate + O2 + H2O = pyridoxal 5'-phosphate + H2O2 + NH4(+). It catalyses the reaction pyridoxine 5'-phosphate + O2 = pyridoxal 5'-phosphate + H2O2. The protein operates within cofactor metabolism; pyridoxal 5'-phosphate salvage; pyridoxal 5'-phosphate from pyridoxamine 5'-phosphate: step 1/1. Its pathway is cofactor metabolism; pyridoxal 5'-phosphate salvage; pyridoxal 5'-phosphate from pyridoxine 5'-phosphate: step 1/1. Catalyzes the oxidation of either pyridoxine 5'-phosphate (PNP) or pyridoxamine 5'-phosphate (PMP) into pyridoxal 5'-phosphate (PLP). This is Pyridoxine/pyridoxamine 5'-phosphate oxidase from Azorhizobium caulinodans (strain ATCC 43989 / DSM 5975 / JCM 20966 / LMG 6465 / NBRC 14845 / NCIMB 13405 / ORS 571).